We begin with the raw amino-acid sequence, 861 residues long: Integrator complex subunit 6-like (861 aa).

Positions 3 to 227 constitute a VWFA domain; the sequence is ILLFLIDTSA…QCLESLVQKV (225 aa). The tract at residues 605–626 is disordered; sequence PQNKVKRPGEPNSPMSSKRRRS. At Ser617 the chain carries Phosphoserine.

This chain is Integrator complex subunit 6-like (INTS6L), found in Homo sapiens (Human).